The following is a 543-amino-acid chain: CTP synthase (543 aa).

Positions 1–267 (MAKFVFVTGG…CREVLDVLNL (267 aa)) are amidoligase domain. Residue S13 participates in CTP binding. UTP is bound at residue S13. 14–19 (SIGKGI) contributes to the ATP binding site. Y54 provides a ligand contact to L-glutamine. Residue D71 participates in ATP binding. Mg(2+) contacts are provided by D71 and E141. Residues 148 to 150 (DIE), 188 to 193 (KTKPTQ), and K224 contribute to the CTP site. UTP is bound by residues 188–193 (KTKPTQ) and K224. The Glutamine amidotransferase type-1 domain occupies 292–534 (KVALVGKYVQ…IEAAQQRLPN (243 aa)). G354 contributes to the L-glutamine binding site. Residue C381 is the Nucleophile; for glutamine hydrolysis of the active site. Residues 382–385 (LGMQ), E405, and R462 each bind L-glutamine. Active-site residues include H507 and E509.

The protein belongs to the CTP synthase family. Homotetramer.

The enzyme catalyses UTP + L-glutamine + ATP + H2O = CTP + L-glutamate + ADP + phosphate + 2 H(+). The catalysed reaction is L-glutamine + H2O = L-glutamate + NH4(+). It catalyses the reaction UTP + NH4(+) + ATP = CTP + ADP + phosphate + 2 H(+). Its pathway is pyrimidine metabolism; CTP biosynthesis via de novo pathway; CTP from UDP: step 2/2. Allosterically activated by GTP, when glutamine is the substrate; GTP has no effect on the reaction when ammonia is the substrate. The allosteric effector GTP functions by stabilizing the protein conformation that binds the tetrahedral intermediate(s) formed during glutamine hydrolysis. Inhibited by the product CTP, via allosteric rather than competitive inhibition. Its function is as follows. Catalyzes the ATP-dependent amination of UTP to CTP with either L-glutamine or ammonia as the source of nitrogen. Regulates intracellular CTP levels through interactions with the four ribonucleotide triphosphates. This chain is CTP synthase, found in Synechococcus sp. (strain WH7803).